The following is a 389-amino-acid chain: NADH-quinone oxidoreductase subunit D (389 aa).

It belongs to the complex I 49 kDa subunit family. As to quaternary structure, NDH-1 is composed of 14 different subunits. Subunits NuoB, C, D, E, F, and G constitute the peripheral sector of the complex.

It localises to the cell inner membrane. It carries out the reaction a quinone + NADH + 5 H(+)(in) = a quinol + NAD(+) + 4 H(+)(out). Functionally, NDH-1 shuttles electrons from NADH, via FMN and iron-sulfur (Fe-S) centers, to quinones in the respiratory chain. The immediate electron acceptor for the enzyme in this species is believed to be ubiquinone. Couples the redox reaction to proton translocation (for every two electrons transferred, four hydrogen ions are translocated across the cytoplasmic membrane), and thus conserves the redox energy in a proton gradient. This is NADH-quinone oxidoreductase subunit D from Rickettsia prowazekii (strain Madrid E).